Reading from the N-terminus, the 172-residue chain is Ribosome maturation factor RimM (172 aa).

A PRC barrel domain is found at 97–170; that stretch reads ENEFYFHEII…KITIEVMEGL (74 aa).

This sequence belongs to the RimM family. As to quaternary structure, binds ribosomal protein uS19.

The protein localises to the cytoplasm. An accessory protein needed during the final step in the assembly of 30S ribosomal subunit, possibly for assembly of the head region. Essential for efficient processing of 16S rRNA. May be needed both before and after RbfA during the maturation of 16S rRNA. It has affinity for free ribosomal 30S subunits but not for 70S ribosomes. The sequence is that of Ribosome maturation factor RimM from Listeria monocytogenes serovar 1/2a (strain ATCC BAA-679 / EGD-e).